We begin with the raw amino-acid sequence, 31 residues long: Scolopendra 20566.01 Da toxin (31 aa).

This sequence belongs to the CRISP family. Venom allergen 5-like subfamily. Post-translationally, contains 3 disulfide bonds. As to expression, expressed by the venom gland.

It localises to the secreted. This Scolopendra angulata (Barbados giant red centipede) protein is Scolopendra 20566.01 Da toxin.